The sequence spans 154 residues: 6,7-dimethyl-8-ribityllumazine synthase (154 aa).

5-amino-6-(D-ribitylamino)uracil is bound by residues phenylalanine 22, 56–58 (AFE), and 80–82 (TVI). Residue 85 to 86 (ST) coordinates (2S)-2-hydroxy-3-oxobutyl phosphate. Histidine 88 functions as the Proton donor in the catalytic mechanism. Position 113 (phenylalanine 113) interacts with 5-amino-6-(D-ribitylamino)uracil. Residue arginine 127 coordinates (2S)-2-hydroxy-3-oxobutyl phosphate.

Belongs to the DMRL synthase family.

It catalyses the reaction (2S)-2-hydroxy-3-oxobutyl phosphate + 5-amino-6-(D-ribitylamino)uracil = 6,7-dimethyl-8-(1-D-ribityl)lumazine + phosphate + 2 H2O + H(+). It functions in the pathway cofactor biosynthesis; riboflavin biosynthesis; riboflavin from 2-hydroxy-3-oxobutyl phosphate and 5-amino-6-(D-ribitylamino)uracil: step 1/2. Functionally, catalyzes the formation of 6,7-dimethyl-8-ribityllumazine by condensation of 5-amino-6-(D-ribitylamino)uracil with 3,4-dihydroxy-2-butanone 4-phosphate. This is the penultimate step in the biosynthesis of riboflavin. This is 6,7-dimethyl-8-ribityllumazine synthase from Lactococcus lactis subsp. cremoris (strain MG1363).